A 699-amino-acid polypeptide reads, in one-letter code: Protein phosphatase 1 regulatory subunit 37 (699 aa).

Residues 1 to 12 (MEIPPQEAPPGP) show a composition bias toward pro residues. The tract at residues 1-42 (MEIPPQEAPPGPGADGEAEEAPVEAPSPGPASPPADGRLKAA) is disordered. Residues Ser50 and Ser56 each carry the phosphoserine modification. 5 LRR repeats span residues 220-240 (SLAV…MLLA), 248-269 (TLRE…AQLG), 277-297 (SLQI…AYIC), 306-326 (GLAT…AFLG), and 334-354 (SLET…RNLK). Residues 467-667 (RLQLSASMPE…PPGPEAKVGS (201 aa)) form a disordered region. A compositionally biased stretch (acidic residues) spans 510–525 (SDSDSDSEGEDRDEAD). The residue at position 566 (Ser566) is a Phosphoserine. 2 stretches are compositionally biased toward pro residues: residues 588-613 (PPVP…PFPT) and 622-642 (DPGP…PPLP).

This sequence belongs to the PPP1R37 family. Interacts with PPP1CA.

Inhibits phosphatase activity of protein phosphatase 1 (PP1) complexes. The polypeptide is Protein phosphatase 1 regulatory subunit 37 (PPP1R37) (Bos taurus (Bovine)).